We begin with the raw amino-acid sequence, 473 residues long: Photosystem II CP43 reaction center protein (473 aa).

Residues 1-14 (MKTLYSLRRFYPVE) constitute a propeptide that is removed on maturation. Residue Thr15 is modified to N-acetylthreonine. A Phosphothreonine modification is found at Thr15. 5 helical membrane-spanning segments follow: residues 69–93 (LFEV…PHLA), 134–155 (LIGP…KDRN), 178–200 (KALY…RKIT), 255–275 (KPFA…LSYS), and 291–312 (WFNN…ASQA). A [CaMn4O5] cluster-binding site is contributed by Glu367. The helical transmembrane segment at 447 to 471 (RARAAAAGFEKGIDRDFEPVLSMTP) threads the bilayer.

Belongs to the PsbB/PsbC family. PsbC subfamily. As to quaternary structure, PSII is composed of 1 copy each of membrane proteins PsbA, PsbB, PsbC, PsbD, PsbE, PsbF, PsbH, PsbI, PsbJ, PsbK, PsbL, PsbM, PsbT, PsbX, PsbY, PsbZ, Psb30/Ycf12, at least 3 peripheral proteins of the oxygen-evolving complex and a large number of cofactors. It forms dimeric complexes. Requires Binds multiple chlorophylls and provides some of the ligands for the Ca-4Mn-5O cluster of the oxygen-evolving complex. It may also provide a ligand for a Cl- that is required for oxygen evolution. PSII binds additional chlorophylls, carotenoids and specific lipids. as cofactor.

The protein localises to the plastid. The protein resides in the chloroplast thylakoid membrane. Functionally, one of the components of the core complex of photosystem II (PSII). It binds chlorophyll and helps catalyze the primary light-induced photochemical processes of PSII. PSII is a light-driven water:plastoquinone oxidoreductase, using light energy to abstract electrons from H(2)O, generating O(2) and a proton gradient subsequently used for ATP formation. This is Photosystem II CP43 reaction center protein from Cryptomeria japonica (Japanese cedar).